Reading from the N-terminus, the 482-residue chain is Anthranilate synthase component 1 (482 aa).

L-tryptophan-binding positions include Ser-47 and 267 to 269 (PYM). 302–303 (GT) contributes to the chorismate binding site. Glu-329 contributes to the Mg(2+) binding site. Residues Tyr-417, Arg-437, 451–453 (GGG), and Gly-453 each bind chorismate. Glu-466 is a binding site for Mg(2+).

This sequence belongs to the anthranilate synthase component I family. As to quaternary structure, heterotetramer consisting of two non-identical subunits: a beta subunit (TrpG) and a large alpha subunit (TrpE). It depends on Mg(2+) as a cofactor.

The enzyme catalyses chorismate + L-glutamine = anthranilate + pyruvate + L-glutamate + H(+). It participates in amino-acid biosynthesis; L-tryptophan biosynthesis; L-tryptophan from chorismate: step 1/5. With respect to regulation, feedback inhibited by tryptophan. Functionally, part of a heterotetrameric complex that catalyzes the two-step biosynthesis of anthranilate, an intermediate in the biosynthesis of L-tryptophan. In the first step, the glutamine-binding beta subunit (TrpG) of anthranilate synthase (AS) provides the glutamine amidotransferase activity which generates ammonia as a substrate that, along with chorismate, is used in the second step, catalyzed by the large alpha subunit of AS (TrpE) to produce anthranilate. In the absence of TrpG, TrpE can synthesize anthranilate directly from chorismate and high concentrations of ammonia. The protein is Anthranilate synthase component 1 (trpE) of Spirochaeta aurantia.